Reading from the N-terminus, the 101-residue chain is NADH-quinone oxidoreductase subunit K (101 aa).

Helical transmembrane passes span 4 to 24, 29 to 49, and 61 to 81; these read LAHYLVLGAILFAMSIVGIFL, IIIILMAIELMLLAVNTNFVA, and IFVFFVLTVAAAEAAIGLAIL.

This sequence belongs to the complex I subunit 4L family. NDH-1 is composed of 14 different subunits. Subunits NuoA, H, J, K, L, M, N constitute the membrane sector of the complex.

It localises to the cell inner membrane. It catalyses the reaction a quinone + NADH + 5 H(+)(in) = a quinol + NAD(+) + 4 H(+)(out). NDH-1 shuttles electrons from NADH, via FMN and iron-sulfur (Fe-S) centers, to quinones in the respiratory chain. The immediate electron acceptor for the enzyme in this species is believed to be ubiquinone. Couples the redox reaction to proton translocation (for every two electrons transferred, four hydrogen ions are translocated across the cytoplasmic membrane), and thus conserves the redox energy in a proton gradient. This is NADH-quinone oxidoreductase subunit K from Burkholderia vietnamiensis (strain G4 / LMG 22486) (Burkholderia cepacia (strain R1808)).